A 252-amino-acid polypeptide reads, in one-letter code: Ribosomal RNA small subunit methyltransferase J (252 aa).

Residues 101-102 (RD), 117-118 (ER), 153-154 (SS), and D171 contribute to the S-adenosyl-L-methionine site.

The protein belongs to the methyltransferase superfamily. RsmJ family.

Its subcellular location is the cytoplasm. The catalysed reaction is guanosine(1516) in 16S rRNA + S-adenosyl-L-methionine = N(2)-methylguanosine(1516) in 16S rRNA + S-adenosyl-L-homocysteine + H(+). Functionally, specifically methylates the guanosine in position 1516 of 16S rRNA. In Salmonella choleraesuis (strain SC-B67), this protein is Ribosomal RNA small subunit methyltransferase J.